We begin with the raw amino-acid sequence, 213 residues long: tRNA (guanine-N(7)-)-methyltransferase (213 aa).

Glu44, Glu69, Asp96, and Asp118 together coordinate S-adenosyl-L-methionine. Residue Asp118 is part of the active site. Residues Lys122, Asp154, and 192–195 (TEYE) each bind substrate.

It belongs to the class I-like SAM-binding methyltransferase superfamily. TrmB family.

The catalysed reaction is guanosine(46) in tRNA + S-adenosyl-L-methionine = N(7)-methylguanosine(46) in tRNA + S-adenosyl-L-homocysteine. It participates in tRNA modification; N(7)-methylguanine-tRNA biosynthesis. Its function is as follows. Catalyzes the formation of N(7)-methylguanine at position 46 (m7G46) in tRNA. This chain is tRNA (guanine-N(7)-)-methyltransferase, found in Limosilactobacillus reuteri (strain DSM 20016) (Lactobacillus reuteri).